Here is a 116-residue protein sequence, read N- to C-terminus: Nucleoid-associated protein EUBELI_02017 (116 aa).

Residues 1-12 (MAKRGGFPGGMP) are compositionally biased toward gly residues. Residues 1–42 (MAKRGGFPGGMPGNMNNLMKQAQRMQRQMEEQQAELENKEFS) are disordered. The segment covering 13 to 26 (GNMNNLMKQAQRMQ) has biased composition (low complexity).

It belongs to the YbaB/EbfC family. Homodimer.

It localises to the cytoplasm. The protein resides in the nucleoid. In terms of biological role, binds to DNA and alters its conformation. May be involved in regulation of gene expression, nucleoid organization and DNA protection. This chain is Nucleoid-associated protein EUBELI_02017, found in Lachnospira eligens (strain ATCC 27750 / DSM 3376 / VPI C15-48 / C15-B4) (Eubacterium eligens).